The sequence spans 373 residues: Dof zinc finger protein 3 (373 aa).

The interval 1–23 (MASGGALSPVEEKPTVVKTTKAE) is disordered. Residues 10–23 (VEEKPTVVKTTKAE) are compositionally biased toward basic and acidic residues. The Dof-type zinc-finger motif lies at 45-99 (PCCPRCNSIKTKFCYYNNYSMAQPRYFCRECRRYWTQGGSLRNVPVGGGCRKSKR). Residues Cys-47, Cys-50, Cys-72, and Cys-75 each coordinate Zn(2+). The disordered stretch occupies residues 297–327 (ALGGADEQQGGGDGGEAVMTKDTGGGASSSA).

In terms of assembly, interacts with RISBZ1/BZIP58.

Its subcellular location is the nucleus. In terms of biological role, transcriptional activator that binds specifically to the DNA consensus core sequence 5'-AAAG-3' also known as prolamin box. Can activate the expression of genes encoding for the seed storage proteins glutelin, prolamin and globulin. Functions synergistically with RISBZ/BZIP58 to positively regulate quantitatively many seed storage proteins. Functions synergistically with RISBZ1/BZIP58 to positively regulate some metabolic enzymes, such as alanine aminotransferase and pyruvate phosphate dikinase, that are expressed in developing seeds. Functions synergistically with RISBZ1/BZIP58 to positively regulate genes that are key players in the development of aleurone layers. Functions synergistically with RISBZ1/BZIP58 to positively regulate the glutelin GLUD-1 gene in endosperm of developing seeds. Can activate the expression of the bifunctional lysine-degrading enzyme, lysine ketoglutarate reductase/saccharopine dehydrogenase (LKR/SDH), one of the key regulators determining free lysine content in plants. In germinating seeds, involved in the gibberellin-mediated activation of the alpha-amylase AMY1.1/AMY1A gene. The chain is Dof zinc finger protein 3 from Oryza sativa subsp. japonica (Rice).